Reading from the N-terminus, the 233-residue chain is Bcl-2-like protein 1 (233 aa).

The BH4 motif lies at 4 to 24 (SNRELVVDFLSYKLSQKGYSW). Residues 27-73 (FSDVEENRTEAPEETEPERETPSAINGNPSWHLADSPAVNGATGHSS) are disordered. Serine 49 is subject to Phosphoserine; by PLK3. Phosphoserine; by CDK1 is present on serine 62. The BH3 motif lies at 86-100 (VKQALREAGDEFELR). A BH1 motif is present at residues 129-148 (ELFRDGVNWGRIVAFFSFGG). The short motif at 180 to 195 (PWIQENGGWDTFVDLY) is the BH2 element. The chain crosses the membrane as a helical span at residues 210 to 226 (FNRWFLTGMTVAGVVLL).

The protein belongs to the Bcl-2 family. Homodimer. Interacts with BCL2L11. Interacts with BAD. Interacts with PGAM5. Interacts with HEBP2. Interacts with p53/TP53 and BBC3; interaction with BBC3 disrupts the interaction with p53/TP53. Interacts with ATP5F1A and ATP5F1B; the interactions mediate the association of isoform Bcl-X(L) with the mitochondrial membrane ATP synthase F(1)F(0) ATP synthase. Interacts with VDAC1. Interacts with BCL2L11 (via BH3). Interacts with RNF183. Interacts with GIMAP3/IAN4 and GIMAP5/IAN5. Interacts with GIMAP5 and HSPA8/HSC70; the interaction between HSPA8 and BCL2L1 is impaired in the absence of GIMAP5. Interacts with isoform 4 of CLU; this interaction releases and activates BAX and promotes cell death. As to quaternary structure, forms heterodimers with BAX, BAK or BCL2; heterodimerization with BAX does not seem to be required for anti-apoptotic activity. Interacts with isoform 1 of SIVA1; the interaction inhibits the anti-apoptotic activity. Interacts with IKZF3. Interacts with RTL10/BOP. Interacts with DNM1L and CLTA; DNM1L and BCL2L1 isoform BCL-X(L) may form a complex in synaptic vesicles that also contains clathrin and MFF. Interacts (via the loop between motifs BH4 and BH3) with NLRP1 (via LRR repeats), but not with NLRP2, NLRP3, NLRP4, PYCARD, nor MEFV. Interacts with BECN1. Post-translationally, proteolytically cleaved by caspases during apoptosis. The cleaved protein, lacking the BH4 motif, has pro-apoptotic activity. Phosphorylated on Ser-62 by CDK1. This phosphorylation is partial in normal mitotic cells, but complete in G2-arrested cells upon DNA-damage, thus promoting subsequent apoptosis probably by triggering caspases-mediated proteolysis. Phosphorylated by PLK3, leading to regulate the G2 checkpoint and progression to cytokinesis during mitosis. Phosphorylation at Ser-49 appears during the S phase and G2, disappears rapidly in early mitosis during prometaphase, metaphase and early anaphase, and re-appears during telophase and cytokinesis. In terms of processing, ubiquitinated by RNF183 during prolonged ER stress, leading to degradation by the proteosome. Expressed in most tissues. Bcl-X(beta) is specifically expressed in cerebellum, heart, and thymus. In the ovary, the predominant form is Bcl-X(L), with a small but detectable level of Bcl-X(S).

The protein localises to the mitochondrion inner membrane. It localises to the mitochondrion outer membrane. It is found in the mitochondrion matrix. The protein resides in the cytoplasmic vesicle. Its subcellular location is the secretory vesicle. The protein localises to the synaptic vesicle membrane. It localises to the cytoplasm. It is found in the cytosol. The protein resides in the cytoskeleton. Its subcellular location is the microtubule organizing center. The protein localises to the centrosome. It localises to the nucleus membrane. Potent inhibitor of cell death. Inhibits activation of caspases. Appears to regulate cell death by blocking the voltage-dependent anion channel (VDAC) by binding to it and preventing the release of the caspase activator, CYC1, from the mitochondrial membrane. Also acts as a regulator of G2 checkpoint and progression to cytokinesis during mitosis. In terms of biological role, isoform Bcl-X(L) also regulates presynaptic plasticity, including neurotransmitter release and recovery, number of axonal mitochondria as well as size and number of synaptic vesicle clusters. During synaptic stimulation, increases ATP availability from mitochondria through regulation of mitochondrial membrane ATP synthase F(1)F(0) activity and regulates endocytic vesicle retrieval in hippocampal neurons through association with DMN1L and stimulation of its GTPase activity in synaptic vesicles. May attenuate inflammation impairing NLRP1-inflammasome activation, hence CASP1 activation and IL1B release. Functionally, isoform Bcl-X(S) promotes apoptosis. This Rattus norvegicus (Rat) protein is Bcl-2-like protein 1 (Bcl2l1).